Reading from the N-terminus, the 448-residue chain is Na(+)-translocating NADH-quinone reductase subunit A (448 aa).

Belongs to the NqrA family. As to quaternary structure, composed of six subunits; NqrA, NqrB, NqrC, NqrD, NqrE and NqrF.

The enzyme catalyses a ubiquinone + n Na(+)(in) + NADH + H(+) = a ubiquinol + n Na(+)(out) + NAD(+). Its function is as follows. NQR complex catalyzes the reduction of ubiquinone-1 to ubiquinol by two successive reactions, coupled with the transport of Na(+) ions from the cytoplasm to the periplasm. NqrA to NqrE are probably involved in the second step, the conversion of ubisemiquinone to ubiquinol. The protein is Na(+)-translocating NADH-quinone reductase subunit A of Glaesserella parasuis serovar 5 (strain SH0165) (Haemophilus parasuis).